The primary structure comprises 153 residues: UPF0266 membrane protein SG1324 (153 aa).

Transmembrane regions (helical) follow at residues 6-26 (IGLV…EFIV), 46-66 (LDGL…ITTD), and 68-88 (KVMT…LAYI).

This sequence belongs to the UPF0266 family.

The protein localises to the cell inner membrane. The protein is UPF0266 membrane protein SG1324 of Sodalis glossinidius (strain morsitans).